Consider the following 147-residue polypeptide: Hemoglobin subunit gamma-1 (147 aa).

At glycine 2 the chain carries N-acetylglycine. In terms of domain architecture, Globin spans 3 to 147 (HFTEEDKATI…VASALSSRYH (145 aa)). Position 13 is a phosphothreonine (threonine 13). 3 positions are modified to phosphoserine: serine 45, serine 51, and serine 53. An N6-acetyllysine modification is found at lysine 60. Position 64 (histidine 64) interacts with heme b. N6-acetyllysine is present on lysine 83. Residue histidine 93 participates in heme b binding. Cysteine 94 carries the S-nitrosocysteine modification. Position 140 is a phosphoserine (serine 140).

Belongs to the globin family. In terms of assembly, heterotetramer of two alpha chains and two gamma chains in fetal hemoglobin (Hb F). In terms of tissue distribution, red blood cells.

Functionally, gamma chains make up the fetal hemoglobin F, in combination with alpha chains. The polypeptide is Hemoglobin subunit gamma-1 (HBG1) (Gorilla gorilla gorilla (Western lowland gorilla)).